The chain runs to 24 residues: Poly-His-poly-Gly peptide 1 (24 aa).

Positions 1 to 13 (EDDHHHHHHHHHG) are enriched in basic residues. A disordered region spans residues 1–24 (EDDHHHHHHHHHGVGGGGGGGGGG). The segment covering 14–24 (VGGGGGGGGGG) has biased composition (gly residues).

Expressed by the venom gland.

The protein localises to the secreted. May serve as a metalloproteinase inhibitor during glandular storage. Their inhibition may be instantly disengaged, by dilution or physiochemical change, when venom is injected into tissue of the victim. In Atheris chlorechis (Western bush viper), this protein is Poly-His-poly-Gly peptide 1.